A 323-amino-acid polypeptide reads, in one-letter code: RING-H2 finger protein ATL32 (323 aa).

A signal peptide spans 1–28 (MMTRVECFNPHRWIILHVAIIIQSKANA). A helical transmembrane segment spans residues 47-67 (TTVFAVLVTLFFLTGLLSVYI). The RING-type; atypical zinc-finger motif lies at 124 to 166 (CAICLNELEDHETVRLLPICNHLFHIDCIDTWLYSHATCPVCR). Residues 210 to 229 (SSEISGKFPRSNSTGHSMDR) form a disordered region.

The protein belongs to the RING-type zinc finger family. ATL subfamily.

It localises to the membrane. It catalyses the reaction S-ubiquitinyl-[E2 ubiquitin-conjugating enzyme]-L-cysteine + [acceptor protein]-L-lysine = [E2 ubiquitin-conjugating enzyme]-L-cysteine + N(6)-ubiquitinyl-[acceptor protein]-L-lysine.. It participates in protein modification; protein ubiquitination. The chain is RING-H2 finger protein ATL32 (ATL32) from Arabidopsis thaliana (Mouse-ear cress).